A 587-amino-acid chain; its full sequence is Arginine--tRNA ligase (587 aa).

The 'HIGH' region motif lies at 123–133 (ANVAKPLHVGH).

It belongs to the class-I aminoacyl-tRNA synthetase family. As to quaternary structure, monomer.

It is found in the cytoplasm. The catalysed reaction is tRNA(Arg) + L-arginine + ATP = L-arginyl-tRNA(Arg) + AMP + diphosphate. In Alkaliphilus oremlandii (strain OhILAs) (Clostridium oremlandii (strain OhILAs)), this protein is Arginine--tRNA ligase.